A 587-amino-acid chain; its full sequence is Kelch-like protein 3 (587 aa).

The segment at 1–24 is disordered; that stretch reads MEGESVKPSPQPTEQAGDGEKNRR. One can recognise a BTB domain in the interval 50-117; that stretch reads CDVMIVAEDV…IYTAEIEVTE (68 aa). The 103-residue stretch at 152–254 folds into the BACK domain; that stretch reads CLGIRAFADV…PRDYLVQTVE (103 aa). Phosphothreonine is present on T295. 6 Kelch repeats span residues 302 to 347, 348 to 394, 396 to 441, 442 to 490, 491 to 537, and 539 to 585; these read VMIV…FMAG, HVYA…VLND, LYAV…VVEG, KLYA…VLSG, QLYA…AVNG, and LYVV…VSAS. T375 is subject to Phosphothreonine. A phosphoserine mark is found at S376 and S433.

It belongs to the KLHL3 family. As to quaternary structure, homodimer. Component of the BCR(KLHL3) E3 ubiquitin ligase complex, at least composed of CUL3 and KLHL3 and RBX1. Interacts with CLDN8. In terms of processing, phosphorylation at Ser-433 by PKA or PKC decreases the interaction with WNK1 and WNK4, leading to inhibit their degradation by the BCR(KLHL3) complex. Phosphorylated at Ser-433 by PKC in response to angiotensin II signaling, decreasing ability to promote degradation of WNK1 and WNK4, leading to activation of Na-Cl cotransporter SLC12A3/NCC. Phosphorylation at Ser-433 is increased by insulin. Dephosphorylated at Ser-433 by calcineurin PPP3CA, promoting degradation of WNK1 and WNK4.

It localises to the cytoplasm. Its subcellular location is the cytoskeleton. It is found in the cytosol. The protein operates within protein modification; protein ubiquitination. Substrate-specific adapter of a BCR (BTB-CUL3-RBX1) E3 ubiquitin ligase complex that acts as a regulator of ion transport in the distal nephron. The BCR(KLHL3) complex acts by mediating ubiquitination and degradation of WNK1 and WNK4, two activators of Na-Cl cotransporter SLC12A3/NCC in distal convoluted tubule cells of kidney, thereby regulating NaCl reabsorption. The BCR(KLHL3) complex also mediates ubiquitination and degradation of WNK3. The BCR(KLHL3) complex also mediates ubiquitination of CLDN8, a tight-junction protein required for paracellular chloride transport in the kidney, leading to its degradation. This is Kelch-like protein 3 (Klhl3) from Rattus norvegicus (Rat).